We begin with the raw amino-acid sequence, 274 residues long: Kit ligand (274 aa).

The N-terminal stretch at 1 to 25 (MKKTQTWIITCIYLQLLLFNPLVKT) is a signal peptide. At 26-215 (KGICGKRVTD…SNSIGDSNLQ (190 aa)) the chain is on the extracellular side. Disulfide bonds link Cys-29-Cys-114 and Cys-68-Cys-164. N-linked (GlcNAc...) asparagine glycosylation is found at Asn-90, Asn-97, Asn-145, and Asn-196. A helical membrane pass occupies residues 216-238 (WAAMALPAFFSLVIGFAFGALYW). At 239–274 (KKKQPNLTRTVENIQINEEDNEISMLQEKEREFQEV) the chain is on the cytoplasmic side.

It belongs to the SCF family. In terms of assembly, homodimer, non-covalently linked. In terms of processing, a soluble form is produced by proteolytic processing of the extracellular domain.

The protein resides in the cytoplasm. Its subcellular location is the cytoskeleton. The protein localises to the cell membrane. It localises to the cell projection. It is found in the lamellipodium. The protein resides in the filopodium. Its subcellular location is the secreted. Its function is as follows. Stimulates the proliferation of mast cells. Able to augment the proliferation of both myeloid and lymphoid hematopoietic progenitors in bone marrow culture. Also mediates cell-cell adhesion. Acts synergistically with other cytokines, probably interleukins. In Canis lupus familiaris (Dog), this protein is Kit ligand (KITLG).